The primary structure comprises 206 residues: Endoribonuclease YbeY (206 aa).

Residues 1–20 form a disordered region; that stretch reads MSQANHNDTHNNIDDNINNH. 3 residues coordinate Zn(2+): His-168, His-172, and His-178.

Belongs to the endoribonuclease YbeY family. Requires Zn(2+) as cofactor.

The protein localises to the cytoplasm. Functionally, single strand-specific metallo-endoribonuclease involved in late-stage 70S ribosome quality control and in maturation of the 3' terminus of the 16S rRNA. In Psychrobacter arcticus (strain DSM 17307 / VKM B-2377 / 273-4), this protein is Endoribonuclease YbeY.